Consider the following 225-residue polypeptide: Urease accessory protein UreG (225 aa).

Residues 1-21 (MHLDHHHESAAAVSADARRPD) are disordered. 33 to 40 (GPVGSGKT) provides a ligand contact to GTP.

The protein belongs to the SIMIBI class G3E GTPase family. UreG subfamily. As to quaternary structure, homodimer. UreD, UreF and UreG form a complex that acts as a GTP-hydrolysis-dependent molecular chaperone, activating the urease apoprotein by helping to assemble the nickel containing metallocenter of UreC. The UreE protein probably delivers the nickel.

The protein resides in the cytoplasm. In terms of biological role, facilitates the functional incorporation of the urease nickel metallocenter. This process requires GTP hydrolysis, probably effectuated by UreG. This is Urease accessory protein UreG from Streptomyces coelicolor (strain ATCC BAA-471 / A3(2) / M145).